The following is a 177-amino-acid chain: MCTSRQIIGSLLVLSVLEIGLGLSSVAVGAVTFFRVRMEQKPQLGDSSPVWSGACFLICGVCGIFCAKKKSGLIMILFSACCICGLIGGILNIQFLRALNKRSSSLYSLYLASMSLACIGISGCTISTWLTCRLASYEQRRMFLEREHSLHHSHEMTEKDTENITNGGGPLALNGRV.

The next 4 helical transmembrane spans lie at 11 to 31 (LLVL…VGAV), 47 to 67 (SSPV…IFCA), 73 to 93 (LIMI…ILNI), and 106 to 126 (LYSL…GCTI). Basic and acidic residues predominate over residues 152 to 162 (HSHEMTEKDTE). A disordered region spans residues 152 to 177 (HSHEMTEKDTENITNGGGPLALNGRV).

The protein resides in the cytoplasm. Its subcellular location is the membrane. This is Transmembrane protein 196 (tmem196) from Xenopus tropicalis (Western clawed frog).